A 382-amino-acid chain; its full sequence is Galactose-1-phosphate uridylyltransferase (382 aa).

Zn(2+) is bound by residues Cys52 and Cys55. Residues Ala61 and Asn77–Asp78 contribute to the UDP-alpha-D-glucose site. A Zn(2+)-binding site is contributed by His121. Asn185 contributes to the UDP-alpha-D-glucose binding site. His196 contacts Zn(2+). Catalysis depends on His198, which acts as the Tele-UMP-histidine intermediate. Gln200 serves as a coordination point for UDP-alpha-D-glucose. 4 residues coordinate Fe cation: Glu214, His313, His330, and His332. Residues Lys345–Val348 and Phe350–Glu351 contribute to the UDP-alpha-D-glucose site.

Belongs to the galactose-1-phosphate uridylyltransferase type 1 family. Homodimer. Zn(2+) serves as cofactor.

The enzyme catalyses alpha-D-galactose 1-phosphate + UDP-alpha-D-glucose = alpha-D-glucose 1-phosphate + UDP-alpha-D-galactose. It functions in the pathway carbohydrate metabolism; galactose metabolism. In terms of biological role, essential for growth on galactose but not for cellulase induction. This is Galactose-1-phosphate uridylyltransferase (gal7) from Hypocrea jecorina (Trichoderma reesei).